Consider the following 293-residue polypeptide: Formamidopyrimidine-DNA glycosylase (293 aa).

The active-site Schiff-base intermediate with DNA is the P2. Residue E3 is the Proton donor of the active site. The active-site Proton donor; for beta-elimination activity is K58. DNA is bound by residues H104, R123, and R166. The segment at 257–293 (QVYDREGDKCRTPACKGAVKRFTQNGRSTFWCPVCQT) adopts an FPG-type zinc-finger fold. The active-site Proton donor; for delta-elimination activity is R283.

This sequence belongs to the FPG family. As to quaternary structure, monomer. It depends on Zn(2+) as a cofactor.

It catalyses the reaction Hydrolysis of DNA containing ring-opened 7-methylguanine residues, releasing 2,6-diamino-4-hydroxy-5-(N-methyl)formamidopyrimidine.. The catalysed reaction is 2'-deoxyribonucleotide-(2'-deoxyribose 5'-phosphate)-2'-deoxyribonucleotide-DNA = a 3'-end 2'-deoxyribonucleotide-(2,3-dehydro-2,3-deoxyribose 5'-phosphate)-DNA + a 5'-end 5'-phospho-2'-deoxyribonucleoside-DNA + H(+). In terms of biological role, involved in base excision repair of DNA damaged by oxidation or by mutagenic agents. Acts as a DNA glycosylase that recognizes and removes damaged bases. Has a preference for oxidized purines, such as 7,8-dihydro-8-oxoguanine (8-oxoG). Has AP (apurinic/apyrimidinic) lyase activity and introduces nicks in the DNA strand. Cleaves the DNA backbone by beta-delta elimination to generate a single-strand break at the site of the removed base with both 3'- and 5'-phosphates. This Nitrobacter winogradskyi (strain ATCC 25391 / DSM 10237 / CIP 104748 / NCIMB 11846 / Nb-255) protein is Formamidopyrimidine-DNA glycosylase.